The sequence spans 243 residues: 3-deoxy-manno-octulosonate cytidylyltransferase (243 aa).

This sequence belongs to the KdsB family.

The protein resides in the cytoplasm. The catalysed reaction is 3-deoxy-alpha-D-manno-oct-2-ulosonate + CTP = CMP-3-deoxy-beta-D-manno-octulosonate + diphosphate. Its pathway is nucleotide-sugar biosynthesis; CMP-3-deoxy-D-manno-octulosonate biosynthesis; CMP-3-deoxy-D-manno-octulosonate from 3-deoxy-D-manno-octulosonate and CTP: step 1/1. Activates KDO (a required 8-carbon sugar) for incorporation into bacterial lipopolysaccharide in Gram-negative bacteria. In Wigglesworthia glossinidia brevipalpis, this protein is 3-deoxy-manno-octulosonate cytidylyltransferase.